A 320-amino-acid chain; its full sequence is Ferrochelatase (320 aa).

Fe cation is bound by residues histidine 194 and glutamate 275.

It belongs to the ferrochelatase family.

The protein localises to the cytoplasm. It catalyses the reaction heme b + 2 H(+) = protoporphyrin IX + Fe(2+). Its pathway is porphyrin-containing compound metabolism; protoheme biosynthesis; protoheme from protoporphyrin-IX: step 1/1. Functionally, catalyzes the ferrous insertion into protoporphyrin IX. The polypeptide is Ferrochelatase (Pectobacterium atrosepticum (strain SCRI 1043 / ATCC BAA-672) (Erwinia carotovora subsp. atroseptica)).